Reading from the N-terminus, the 250-residue chain is MAAGTSNYWEDLRKQARQLENELDLKLVSFSKLCTSYSHSSARDGGRDRYSSDTTPLLNGSSQDRMFETMAIEIEQLLARLTGVNDKMAEYTNSAGVPSLNAALMHTLQRHRDILQDYTHEFHKTKANFMAIRERENLMGSVRKDIESYKSGSGVNNRRTELFLKEHDHLRNSDRLIEETISIAMATKENMTSQRGMLKSIHSKMNTLANRFPAVNSLIQRINLRKRRDSLILGGVIGICTILLLLYAFH.

Residue A2 is modified to N-acetylalanine. Residues 2–229 (AAGTSNYWED…QRINLRKRRD (228 aa)) lie on the Cytoplasmic side of the membrane. Positions 9–30 (WEDLRKQARQLENELDLKLVSF) form a coiled coil. Residues 38 to 59 (SHSSARDGGRDRYSSDTTPLLN) form a disordered region. Over residues 41–51 (SARDGGRDRYS) the composition is skewed to basic and acidic residues. A coiled-coil region spans residues 68–95 (ETMAIEIEQLLARLTGVNDKMAEYTNSA). Residue S141 is modified to Phosphoserine. A helical; Anchor for type IV membrane protein transmembrane segment spans residues 230–250 (SLILGGVIGICTILLLLYAFH).

It belongs to the GOSR1 family. In terms of assembly, component of several multiprotein Golgi SNARE complexes. Identified in a SNARE complex with BET1, STX5 and YKT6, in a SNARE complex with BET1L, STX5 and YKT6, in a SNARE complex with STX5, GOSR2, SEC22B and BET1, and in complex with STX5 and COG3. Interacts with GABARAPL2.

It localises to the golgi apparatus membrane. In terms of biological role, involved in transport from the ER to the Golgi apparatus as well as in intra-Golgi transport. It belongs to a super-family of proteins called t-SNAREs or soluble NSF (N-ethylmaleimide-sensitive factor) attachment protein receptor. May play a protective role against hydrogen peroxide induced cytotoxicity under glutathione depleted conditions in neuronal cells by regulating the intracellular ROS levels via inhibition of p38 MAPK (MAPK11, MAPK12, MAPK13 and MAPK14). Participates in docking and fusion stage of ER to cis-Golgi transport. Plays an important physiological role in VLDL-transport vesicle-Golgi fusion and thus in VLDL delivery to the hepatic cis-Golgi. This chain is Golgi SNAP receptor complex member 1 (GOSR1), found in Cricetulus griseus (Chinese hamster).